A 946-amino-acid chain; its full sequence is Phosphatidylinositol 4,5-bisphosphate 5-phosphatase INP51 (946 aa).

Residues 151 to 480 form the SAC domain; sequence LKKLFSDGTF…YYWLDRTYTK (330 aa). Disordered stretches follow at residues 872-902 and 927-946; these read SDSI…SDLK and PKRD…FIER. The segment covering 936–946 has biased composition (acidic residues); sequence ENEDEPLFIER.

Belongs to the synaptojanin family. It in the central section; belongs to the inositol 1,4,5-trisphosphate 5-phosphatase family. Interacts with IRS4 and TAX4.

It is found in the cytoplasm. Its subcellular location is the cytoskeleton. The protein localises to the actin patch. It carries out the reaction a 1,2-diacyl-sn-glycero-3-phospho-(1D-myo-inositol-4,5-bisphosphate) + H2O = a 1,2-diacyl-sn-glycero-3-phospho-(1D-myo-inositol 4-phosphate) + phosphate. With respect to regulation, IRS4 and TAX4 are both positive regulator of INP51 activity and phosphatidylinositol 4,5-bisphosphate turnover. In terms of biological role, controls the cellular levels and subcellular distribution of phosphatidylinositol 4,5-bisphosphate (PtdIns(4,5)P2). Does not utilize phosphatidylinositol 3,5-bisphosphate (PtdIns(3,5)P2), nor phosphatidylinositol 3-phosphate (PtdIns(3)P) and phosphatidylinositol 4-phosphate (PtdIns(4)P). Plays an essential role in a TGN (trans Golgi network)-to-early endosome pathway. Involved in endocytosis and acts as a negative regulator of the Slm pathway which modulates polarized actin assembly and growth. The polypeptide is Phosphatidylinositol 4,5-bisphosphate 5-phosphatase INP51 (INP51) (Saccharomyces cerevisiae (strain ATCC 204508 / S288c) (Baker's yeast)).